Consider the following 316-residue polypeptide: Probable cell division protein WhiA (316 aa).

The H-T-H motif DNA-binding region spans 275–309; that stretch reads TLKELGEMVSGGKISKSGINHRLRKIDDIAEKLRA.

This sequence belongs to the WhiA family.

In terms of biological role, involved in cell division and chromosome segregation. This chain is Probable cell division protein WhiA, found in Bacillus anthracis (strain CDC 684 / NRRL 3495).